Here is a 381-residue protein sequence, read N- to C-terminus: Creatine kinase B-type (381 aa).

Serine 4 carries the phosphoserine modification. Positions 11 to 98 (KLRFPAEDEF…FDPIIEDRHG (88 aa)) constitute a Phosphagen kinase N-terminal domain. Threonine 35 carries the phosphothreonine modification. Lysine 45 participates in a covalent cross-link: Glycyl lysine isopeptide (Lys-Gly) (interchain with G-Cter in ubiquitin). Valine 72 is a creatine binding site. Basic and acidic residues predominate over residues 96–110 (RHGGYKPSDEHKTDL). The tract at residues 96 to 123 (RHGGYKPSDEHKTDLNPDNLQGGDDLDP) is disordered. Glycyl lysine isopeptide (Lys-Gly) (interchain with G-Cter in ubiquitin) cross-links involve residues lysine 101 and lysine 107. Tyrosine 125 carries the phosphotyrosine modification. The 243-residue stretch at 125 to 367 (YVLSSRVRTG…KLLIEMEQRL (243 aa)) folds into the Phosphagen kinase C-terminal domain. ATP-binding positions include 128 to 132 (SSRVR), arginine 130, arginine 132, and histidine 191. The tract at residues 130–138 (RVRTGRSIR) is internal MTS-like signal. Position 199 is a phosphoserine (serine 199). Residue glutamate 232 coordinates creatine. Arginine 236 contributes to the ATP binding site. 3'-nitrotyrosine is present on tyrosine 269. Serine 285 provides a ligand contact to creatine. ATP-binding positions include arginine 292, arginine 320, 320-325 (RGTGGV), and aspartate 335. Threonine 322 carries the post-translational modification Phosphothreonine. Residue lysine 381 forms a Glycyl lysine isopeptide (Lys-Gly) (interchain with G-Cter in ubiquitin) linkage.

This sequence belongs to the ATP:guanido phosphotransferase family. Dimer of identical or non-identical chains, which can be either B (brain type) or M (muscle type). With MM being the major form in skeletal muscle and myocardium, MB existing in myocardium, and BB existing in many tissues, especially brain. Interacts with SLC12A6 (via C-terminus); the interaction may be required for SLC12A6 potassium-chloride cotransport activity. Post-translationally, ubiquitinated by the ECS(ASB9) complex, leading to its degradation by the proteasome.

Its subcellular location is the cytoplasm. The protein resides in the cytosol. The protein localises to the mitochondrion. It is found in the cell membrane. The enzyme catalyses creatine + ATP = N-phosphocreatine + ADP + H(+). Reversibly catalyzes the transfer of phosphate between ATP and various phosphogens (e.g. creatine phosphate). Creatine kinase isoenzymes play a central role in energy transduction in tissues with large, fluctuating energy demands, such as skeletal muscle, heart, brain and spermatozoa. Acts as a key regulator of adaptive thermogenesis as part of the futile creatine cycle: localizes to the mitochondria of thermogenic fat cells and acts by mediating phosphorylation of creatine to initiate a futile cycle of creatine phosphorylation and dephosphorylation. During the futile creatine cycle, creatine and N-phosphocreatine are in a futile cycle, which dissipates the high energy charge of N-phosphocreatine as heat without performing any mechanical or chemical work. This Canis lupus familiaris (Dog) protein is Creatine kinase B-type (CKB).